A 373-amino-acid chain; its full sequence is Peptidoglycan recognition protein 4 (373 aa).

The signal sequence occupies residues 1–17 (MLPWLLVFSALGIQAWG). Asn22, Asn39, Asn109, Asn145, and Asn247 each carry an N-linked (GlcNAc...) asparagine glycan. 2 N-acetylmuramoyl-L-alanine amidase domains span residues 74–212 (TPVN…ACPG) and 235–358 (YGII…LSPG). Disulfide bonds link Cys210–Cys332, Cys226–Cys270, and Cys246–Cys252. 2 residues coordinate peptidoglycan: Tyr263 and Tyr274. Interaction with murein stretches follow at residues 293 to 302 (QGSSTPGYDD) and 353 to 354 (RT).

Belongs to the N-acetylmuramoyl-L-alanine amidase 2 family. As to quaternary structure, homodimer; disulfide-linked. Heterodimer with PGLYRP3; disulfide-linked. In terms of processing, N-glycosylated. In terms of tissue distribution, detected in skin epidermis, eccrine sweat glands and ducts, mucous cells in the submandibular salivary gland, mucous cells in the throat, ciliary body epithelial cells of the eye, small intestine, colon, stomach and in mature epithelial cells of the tongue (at protein level). High expression in skin and esophagus. Expressed also to a much lesser extent in the tonsils and thymus.

The protein localises to the secreted. Functionally, pattern receptor that binds to murein peptidoglycans (PGN) of Gram-positive bacteria. Has bactericidal activity towards Gram-positive bacteria. May kill Gram-positive bacteria by interfering with peptidoglycan biosynthesis. Also binds to Gram-negative bacteria, and has bacteriostatic activity towards Gram-negative bacteria. Plays a role in innate immunity. This is Peptidoglycan recognition protein 4 (PGLYRP4) from Homo sapiens (Human).